The primary structure comprises 114 residues: Cholecystokinin (114 aa).

Residues 1-20 (MNGGLCLCVLMAVLAAGTLA) form the signal peptide. Tyr-96 is subject to Sulfotyrosine. The residue at position 102 (Phe-102) is a Phenylalanine amide. Positions 106–114 (SAEEYEYTS) are excised as a propeptide. 2 positions are modified to sulfotyrosine: Tyr-110 and Tyr-112.

Belongs to the gastrin/cholecystokinin family. In terms of assembly, binds to CCK-A receptors in the pancreas and CCK-B receptors in the brain. In terms of processing, the precursor is cleaved by proteases to produce a number of active cholecystokinins. Brain contains CCK-octapeptide (CCK8) and several CCK-desoctapeptides; whereas pig gut contains intact CCK33, CCK39, and CCK58 as well as CCK-octapeptide and the CCK-desoctapeptides. Distribution differences are due to tissue-specific post-translational processing events. The precursor is cleaved by ACE, which removes the Gly-Arg-Arg peptide at the C-terminus, leading to mature hormone. In terms of tissue distribution, synthesized in both cerebral cortex and duodenal mucosa.

The protein resides in the secreted. This peptide hormone induces gall bladder contraction and the release of pancreatic enzymes in the gut. Its function in the brain is not clear. Binding to CCK-A receptors stimulates amylase release from the pancreas, binding to CCK-B receptors stimulates gastric acid secretion. The polypeptide is Cholecystokinin (CCK) (Sus scrofa (Pig)).